A 339-amino-acid chain; its full sequence is DNA-directed RNA polymerase subunit alpha (339 aa).

The alpha N-terminal domain (alpha-NTD) stretch occupies residues 1-233; the sequence is MVREEVAGST…DLFLPFLHAE (233 aa). The interval 264 to 339 is alpha C-terminal domain (alpha-CTD); it reads KKGIPLNCIF…IDLLKNKLSF (76 aa).

It belongs to the RNA polymerase alpha chain family. As to quaternary structure, in plastids the minimal PEP RNA polymerase catalytic core is composed of four subunits: alpha, beta, beta', and beta''. When a (nuclear-encoded) sigma factor is associated with the core the holoenzyme is formed, which can initiate transcription.

The protein localises to the plastid. It is found in the chloroplast. It carries out the reaction RNA(n) + a ribonucleoside 5'-triphosphate = RNA(n+1) + diphosphate. DNA-dependent RNA polymerase catalyzes the transcription of DNA into RNA using the four ribonucleoside triphosphates as substrates. In Agropyron cristatum (Crested wheatgrass), this protein is DNA-directed RNA polymerase subunit alpha.